The primary structure comprises 2280 residues: Metacaspase-3 (2280 aa).

7 disordered regions span residues 56–83 (ILSKGKKNKNENIKKRINEKDNDTDRED), 202–284 (YSTE…THRG), 791–819 (YKNSMNSNDDIQNSNNNNNNNNNNNMVNN), 931–954 (DDNSVQDSFFSRTERSNSQNRYDK), 994–1015 (SGKYQRNIPQNDDNDHNDDDSE), 1278–1306 (KTNNKTNSNYSSNNNNDNNNNNNNSNPFI), and 1469–1500 (KAPTNVKAPTNVKAPTNVNAPTNVNAPTNANA). Positions 63–83 (NKNENIKKRINEKDNDTDRED) are enriched in basic and acidic residues. Composition is skewed to polar residues over residues 205–219 (EHTQSIDNNNITSKR) and 228–278 (DKAQ…NRKG). 2 stretches are compositionally biased toward low complexity: residues 793-819 (NSMNSNDDIQNSNNNNNNNNNNNMVNN) and 931-941 (DDNSVQDSFFS). Composition is skewed to low complexity over residues 1278 to 1303 (KTNNKTNSNYSSNNNNDNNNNNNNSN) and 1482 to 1500 (APTNVNAPTNVNAPTNANA).

This sequence belongs to the peptidase C14B family.

Functionally, protease that cleaves specifically after arginine or lysine residues. This chain is Metacaspase-3, found in Plasmodium falciparum (isolate 3D7).